The primary structure comprises 360 residues: DNA replication and repair protein RecF (360 aa).

30–37 (GDNAQGKT) serves as a coordination point for ATP.

Belongs to the RecF family.

It localises to the cytoplasm. Functionally, the RecF protein is involved in DNA metabolism; it is required for DNA replication and normal SOS inducibility. RecF binds preferentially to single-stranded, linear DNA. It also seems to bind ATP. In Lachnoclostridium phytofermentans (strain ATCC 700394 / DSM 18823 / ISDg) (Clostridium phytofermentans), this protein is DNA replication and repair protein RecF.